We begin with the raw amino-acid sequence, 193 residues long: Xanthine phosphoribosyltransferase (193 aa).

Xanthine-binding residues include leucine 20 and threonine 27. 128–132 (ANGQA) is a 5-phospho-alpha-D-ribose 1-diphosphate binding site. Residue lysine 156 coordinates xanthine.

It belongs to the purine/pyrimidine phosphoribosyltransferase family. Xpt subfamily. As to quaternary structure, homodimer.

Its subcellular location is the cytoplasm. It carries out the reaction XMP + diphosphate = xanthine + 5-phospho-alpha-D-ribose 1-diphosphate. It participates in purine metabolism; XMP biosynthesis via salvage pathway; XMP from xanthine: step 1/1. Converts the preformed base xanthine, a product of nucleic acid breakdown, to xanthosine 5'-monophosphate (XMP), so it can be reused for RNA or DNA synthesis. The sequence is that of Xanthine phosphoribosyltransferase from Streptococcus gordonii (strain Challis / ATCC 35105 / BCRC 15272 / CH1 / DL1 / V288).